Reading from the N-terminus, the 569-residue chain is Pyrophosphate--fructose 6-phosphate 1-phosphotransferase subunit beta (569 aa).

G107 contributes to the diphosphate binding site. Residue D201 coordinates Mg(2+). Substrate contacts are provided by residues 229–231, 268–269, 276–278, E337, and 442–445; these read TID, KY, MGR, and YEGR. Residue D231 is the Proton acceptor of the active site.

It belongs to the phosphofructokinase type A (PFKA) family. PPi-dependent PFK group II subfamily. Clade 'Long' sub-subfamily. Tetramer of two alpha (regulatory) and two beta (catalytic) chains. Mg(2+) serves as cofactor.

Its subcellular location is the cytoplasm. It catalyses the reaction beta-D-fructose 6-phosphate + diphosphate = beta-D-fructose 1,6-bisphosphate + phosphate + H(+). It participates in carbohydrate degradation; glycolysis; D-glyceraldehyde 3-phosphate and glycerone phosphate from D-glucose: step 3/4. With respect to regulation, allosterically activated by fructose 2,6-bisphosphate. In terms of biological role, catalytic subunit of pyrophosphate--fructose 6-phosphate 1-phosphotransferase. Catalyzes the phosphorylation of D-fructose 6-phosphate, the first committing step of glycolysis. Uses inorganic phosphate (PPi) as phosphoryl donor instead of ATP like common ATP-dependent phosphofructokinases (ATP-PFKs), which renders the reaction reversible, and can thus function both in glycolysis and gluconeogenesis. This is Pyrophosphate--fructose 6-phosphate 1-phosphotransferase subunit beta from Solanum tuberosum (Potato).